The primary structure comprises 744 residues: Tripartite motif-containing protein 2 (744 aa).

At serine 10 the chain carries Phosphoserine. The RING-type zinc-finger motif lies at 23 to 64; that stretch reads CSICLERYKNPKVLPCLHTFCERCLQNYIPAHSLTLSCPVCR. The segment at 113 to 154 adopts a B box-type zinc-finger fold; sequence GKPLSCPNHDGNVMDFYCQSCETAMCRECTEGEHAEHPTVPL. Positions 118, 121, 141, and 146 each coordinate Zn(2+). The stretch at 320-421 is one Filamin repeat; it reads TTNAVASETV…IRGSPFKLKV (102 aa). Threonine 371 is modified (phosphothreonine). Residues serine 375, serine 424, and serine 428 each carry the phosphoserine modification. Positions 432–462 are disordered; it reads EGVKRRVKSPGSGHVKQKAVKRPASMYSTGK. 6 NHL repeats span residues 473 to 516, 520 to 563, 564 to 605, 609 to 652, 656 to 699, and 700 to 743; these read IFRV…FSND, KSRF…FSSD, GKFK…FQPN, VTRF…FNQE, MLKF…FDGS, and GSFL…YRYL.

This sequence belongs to the TRIM/RBCC family. In terms of assembly, forms homooligomers. Interacts with TRIM3; this interaction reduces TRIM2 activity. Interacts with myosin V; myosin V may not be a substrate for ubiquitination. Interacts with NEFL. Interacts with phosphorylated BCL2L11. Interacts with SIRPA. Post-translationally, RING-type zinc finger-dependent and UBE2D1-dependent autoubiquitination.

The protein localises to the cytoplasm. It catalyses the reaction S-ubiquitinyl-[E2 ubiquitin-conjugating enzyme]-L-cysteine + [acceptor protein]-L-lysine = [E2 ubiquitin-conjugating enzyme]-L-cysteine + N(6)-ubiquitinyl-[acceptor protein]-L-lysine.. It functions in the pathway protein modification; protein ubiquitination. In terms of biological role, UBE2D1-dependent E3 ubiquitin-protein ligase that mediates the ubiquitination of NEFL and of phosphorylated BCL2L11. Plays a neuroprotective function. May play a role in neuronal rapid ischemic tolerance. Plays a role in antiviral immunity and limits New World arenavirus infection independently of its ubiquitin ligase activity. The protein is Tripartite motif-containing protein 2 (TRIM2) of Bos taurus (Bovine).